Here is a 440-residue protein sequence, read N- to C-terminus: Thymidine phosphorylase (440 aa).

This sequence belongs to the thymidine/pyrimidine-nucleoside phosphorylase family. As to quaternary structure, homodimer.

It carries out the reaction thymidine + phosphate = 2-deoxy-alpha-D-ribose 1-phosphate + thymine. The protein operates within pyrimidine metabolism; dTMP biosynthesis via salvage pathway; dTMP from thymine: step 1/2. In terms of biological role, the enzymes which catalyze the reversible phosphorolysis of pyrimidine nucleosides are involved in the degradation of these compounds and in their utilization as carbon and energy sources, or in the rescue of pyrimidine bases for nucleotide synthesis. This chain is Thymidine phosphorylase, found in Salmonella dublin (strain CT_02021853).